We begin with the raw amino-acid sequence, 305 residues long: Ribonuclease BN (305 aa).

7 residues coordinate Zn(2+): H64, H66, D68, H69, H141, D212, and H270. Residue D68 is the Proton acceptor of the active site.

This sequence belongs to the RNase Z family. RNase BN subfamily. As to quaternary structure, homodimer. It depends on Zn(2+) as a cofactor.

Its function is as follows. Zinc phosphodiesterase, which has both exoribonuclease and endoribonuclease activities. The chain is Ribonuclease BN from Escherichia coli O45:K1 (strain S88 / ExPEC).